A 248-amino-acid chain; its full sequence is Probable transcriptional regulatory protein HCH_04926 (248 aa).

It belongs to the TACO1 family.

It localises to the cytoplasm. The chain is Probable transcriptional regulatory protein HCH_04926 from Hahella chejuensis (strain KCTC 2396).